Consider the following 91-residue polypeptide: Small ribosomal subunit protein uS19 (91 aa).

The protein belongs to the universal ribosomal protein uS19 family.

In terms of biological role, protein S19 forms a complex with S13 that binds strongly to the 16S ribosomal RNA. The polypeptide is Small ribosomal subunit protein uS19 (rpsS) (Mycoplasmopsis pulmonis (strain UAB CTIP) (Mycoplasma pulmonis)).